The primary structure comprises 409 residues: Tryptophan synthase beta chain (409 aa).

Lys-86 is modified (N6-(pyridoxal phosphate)lysine).

The protein belongs to the TrpB family. As to quaternary structure, tetramer of two alpha and two beta chains. Pyridoxal 5'-phosphate serves as cofactor.

It catalyses the reaction (1S,2R)-1-C-(indol-3-yl)glycerol 3-phosphate + L-serine = D-glyceraldehyde 3-phosphate + L-tryptophan + H2O. It participates in amino-acid biosynthesis; L-tryptophan biosynthesis; L-tryptophan from chorismate: step 5/5. Functionally, the beta subunit is responsible for the synthesis of L-tryptophan from indole and L-serine. The protein is Tryptophan synthase beta chain of Shewanella pealeana (strain ATCC 700345 / ANG-SQ1).